A 261-amino-acid polypeptide reads, in one-letter code: Zinc import ATP-binding protein ZnuC (261 aa).

The region spanning 6 to 221 (IRLEKVAVRF…PAFVELFGNN (216 aa)) is the ABC transporter domain. 38-45 (GPNGAGKT) is an ATP binding site.

Belongs to the ABC transporter superfamily. Zinc importer (TC 3.A.1.15.5) family. In terms of assembly, the complex is composed of two ATP-binding proteins (ZnuC), two transmembrane proteins (ZnuB) and a solute-binding protein (ZnuA).

It is found in the cell inner membrane. The enzyme catalyses Zn(2+)(out) + ATP(in) + H2O(in) = Zn(2+)(in) + ADP(in) + phosphate(in) + H(+)(in). In terms of biological role, part of the ABC transporter complex ZnuABC involved in zinc import. Responsible for energy coupling to the transport system. The sequence is that of Zinc import ATP-binding protein ZnuC from Pseudomonas fluorescens (strain Pf0-1).